A 106-amino-acid polypeptide reads, in one-letter code: UPF0145 protein Pput_2816 (106 aa).

It belongs to the UPF0145 family.

This chain is UPF0145 protein Pput_2816, found in Pseudomonas putida (strain ATCC 700007 / DSM 6899 / JCM 31910 / BCRC 17059 / LMG 24140 / F1).